Consider the following 86-residue polypeptide: Large ribosomal subunit protein bL27 (86 aa).

The interval 1-20 is disordered; sequence MAHKKAGGSSRNGRDSESKR.

It belongs to the bacterial ribosomal protein bL27 family.

This is Large ribosomal subunit protein bL27 from Paraburkholderia phymatum (strain DSM 17167 / CIP 108236 / LMG 21445 / STM815) (Burkholderia phymatum).